Here is a 156-residue protein sequence, read N- to C-terminus: MIYKTKLGEIDIRDEDILYFNEGIPGFTHLRKFALIPIQNQPIQWLTSIEDPFVALPVVDPWLVCIDYSLTLTDEDIQDLDIKDKNDVGILSILTIPKGCPEKTTINLLAPIVINLKNRKAKQIIQENSSYSVKHLVKDEIERSQSLLKKSKTGSE.

This sequence belongs to the FliW family. As to quaternary structure, interacts with translational regulator CsrA and flagellin(s).

It is found in the cytoplasm. Acts as an anti-CsrA protein, binds CsrA and prevents it from repressing translation of its target genes, one of which is flagellin. Binds to flagellin and participates in the assembly of the flagellum. The protein is Flagellar assembly factor FliW of Pseudothermotoga lettingae (strain ATCC BAA-301 / DSM 14385 / NBRC 107922 / TMO) (Thermotoga lettingae).